The primary structure comprises 221 residues: Serotriflin (221 aa).

The SCP domain maps to 19 to 147; it reads LDKHNALRRS…SYNYYYVCHY (129 aa). The N-linked (GlcNAc...) asparagine glycan is linked to N48. Intrachain disulfides connect C56–C134, C73–C148, C129–C145, C167–C174, C170–C179, C183–C216, C192–C210, and C201–C214. One can recognise a ShKT domain in the interval 183–216; the sequence is CKHVDRYSNCNSLVQQISCQSNNMNTDCPASCFC.

In terms of assembly, forms a stable, non-covalent complex with SSP-2.

It localises to the secreted. The chain is Serotriflin from Protobothrops flavoviridis (Habu).